A 323-amino-acid chain; its full sequence is Thiamine-monophosphate kinase (323 aa).

4 residues coordinate Mg(2+): Asp30, Ser45, Thr46, and Asp47. His54 lines the substrate pocket. Residues Asp75 and Asp122 each contribute to the Mg(2+) site. ATP is bound by residues 121–122 (GD) and Arg146. Position 212 (Asp212) interacts with Mg(2+). Residue Ser214 participates in ATP binding. Position 215 (Asp215) interacts with Mg(2+). Glu263 and Phe319 together coordinate substrate.

The protein belongs to the thiamine-monophosphate kinase family.

The enzyme catalyses thiamine phosphate + ATP = thiamine diphosphate + ADP. The protein operates within cofactor biosynthesis; thiamine diphosphate biosynthesis; thiamine diphosphate from thiamine phosphate: step 1/1. Its function is as follows. Catalyzes the ATP-dependent phosphorylation of thiamine-monophosphate (TMP) to form thiamine-pyrophosphate (TPP), the active form of vitamin B1. This Buchnera aphidicola subsp. Schizaphis graminum (strain Sg) protein is Thiamine-monophosphate kinase.